We begin with the raw amino-acid sequence, 446 residues long: SAAALALLLCAGQVIALPVNSPMNKGDTEVMKCIVEVISDTLSKPSPMPVSQECFETLRGDERILSILRHQNLLKELQDLALQGAKERSHQQKKQSSYEDELSEVLEKQNDQAELKEGTEEASSKEAAEKRGDSKEVEKNDEDADGAKPQASLEPPXXXEAEDQTPGEEEAASTHPLASLPSKKRPGAQAEEDHEGPSQGPVDREKGPSAEQGPQAEREEEEEAEAGEKAVPEEEGPRSEAFDSHPSLGYKEMQRGWPQAPAMDGAGKTGAEEAQPPEGKGAREHSRQEEEEETAGAPQGLFRGGKRGEPAQEEEERLSEEWENAKRWSKMDRLAKELTAEKRLQGEEEEEEEEEDPDRSMKLSFRAPAYGFRGPGLQLRRGWRPSSREDSVEAGLPLQVRXYLEEKKEEEGSANRRPEDQELESLSAIEAELEKVAPQLQSLRRG.

The first 16 residues, 1-16 (SAAALALLLCAGQVIA), serve as a signal peptide directing secretion. A disulfide bridge connects residues cysteine 33 and cysteine 54. The disordered stretch occupies residues 85–426 (AKERSHQQKK…RPEDQELESL (342 aa)). Serine 97 carries the phosphoserine modification. The span at 105–138 (VLEKQNDQAELKEGTEEASSKEAAEKRGDSKEVE) shows a compositional bias: basic and acidic residues. Residues 160-171 (EAEDQTPGEEEA) are compositionally biased toward acidic residues. At serine 209 the chain carries Phosphoserine. Residues 226-243 (AGEKAVPEEEGPRSEAFD) are compositionally biased toward basic and acidic residues. Serine 286 bears the Phosphoserine mark. Glycine 304 bears the Glycine amide mark. Serine 319 is modified (phosphoserine). Basic and acidic residues predominate over residues 319 to 346 (SEEWENAKRWSKMDRLAKELTAEKRLQG). A compositionally biased stretch (acidic residues) spans 347–357 (EEEEEEEEEDP). Serine 360 carries the phosphoserine modification. Methionine sulfoxide is present on methionine 361. Serine 387, serine 391, serine 413, and serine 427 each carry phosphoserine. Positions 403–420 (YLEEKKEEEGSANRRPED) are enriched in basic and acidic residues. A glycan (O-linked (Xyl...) (chondroitin sulfate) serine) is linked at serine 413.

This sequence belongs to the chromogranin/secretogranin protein family. In terms of assembly, self-interacts; self-assembly is promoted in vitro by chondroitin sulfate attachment which occurs at mildly acidic pH conditions. Interacts with SCG3. Interacts with ITPR1 in the secretory granules. Post-translationally, O-glycosylated; contains chondroitin sulfate (CS). CS attachment is pH-dependent, being observed at mildly acidic conditions of pH 5 but not at neutral pH, and promotes self-assembly in vitro. Parathyroid CHGA is sulfated on tyrosine residues, whereas adrenal CHGA seems to be mainly sulfated on oligosaccharide residues.

It is found in the secreted. Its subcellular location is the cytoplasmic vesicle. The protein localises to the secretory vesicle. It localises to the neuronal dense core vesicle. Strongly inhibits glucose induced insulin release from the pancreas. Its function is as follows. Inhibits low calcium-stimulated parathyroid cell secretion. In terms of biological role, inhibits catecholamine release from chromaffin cells and noradrenergic neurons by acting as a non-competitive nicotinic cholinergic antagonist. Can induce mast cell migration, degranulation and production of cytokines and chemokines. Functionally, regulates granule biogenesis in endocrine cells by up-regulating the transcription of protease nexin 1 (SERPINE2) via a cAMP-PKA-SP1 pathway. This leads to inhibition of granule protein degradation in the Golgi complex which in turn promotes granule formation. This chain is Chromogranin-A (CHGA), found in Sus scrofa (Pig).